A 384-amino-acid polypeptide reads, in one-letter code: Cysteine protease ATG4B (384 aa).

Cys74 acts as the Nucleophile in catalysis. Catalysis depends on residues Asp269 and His271. The LIR motif lies at 379-382 (FEIL).

This sequence belongs to the peptidase C54 family.

The protein resides in the cytoplasm. It is found in the cytosol. It localises to the cytoplasmic vesicle. Its subcellular location is the autophagosome. The protein localises to the endoplasmic reticulum. The protein resides in the mitochondrion. It catalyses the reaction [protein]-C-terminal L-amino acid-glycyl-phosphatidylethanolamide + H2O = [protein]-C-terminal L-amino acid-glycine + a 1,2-diacyl-sn-glycero-3-phosphoethanolamine. It carries out the reaction [protein]-C-terminal L-amino acid-glycyl-phosphatidylserine + H2O = [protein]-C-terminal L-amino acid-glycine + a 1,2-diacyl-sn-glycero-3-phospho-L-serine. Functionally, cysteine protease that plays a key role in autophagy by mediating both proteolytic activation and delipidation of ATG8 family proteins. Required for canonical autophagy (macroautophagy), non-canonical autophagy as well as for mitophagy. The protease activity is required for proteolytic activation of ATG8 family proteins: cleaves the C-terminal amino acid of ATG8 proteins to reveal a C-terminal glycine. Exposure of the glycine at the C-terminus is essential for ATG8 proteins conjugation to phosphatidylethanolamine (PE) and insertion to membranes, which is necessary for autophagy. Protease activity is also required to counteract formation of high-molecular weight conjugates of ATG8 proteins (ATG8ylation): acts as a deubiquitinating-like enzyme that removes ATG8 conjugated to other proteins, such as ATG3. In addition to the protease activity, also mediates delipidation of ATG8 family proteins. Catalyzes delipidation of PE-conjugated forms of ATG8 proteins during macroautophagy. Also involved in non-canonical autophagy, a parallel pathway involving conjugation of ATG8 proteins to single membranes at endolysosomal compartments, by catalyzing delipidation of ATG8 proteins conjugated to phosphatidylserine (PS). The protein is Cysteine protease ATG4B of Xenopus laevis (African clawed frog).